The following is a 92-amino-acid chain: MITVNSTSETLFNFPCDYSIKIFGKNCEKFQNTICTIVERHTHKLNPNKITKKHSSKGNYVSFSIRIIANSRIQLDSINQDLKNCNLVSYVL.

The protein belongs to the UPF0250 family.

The polypeptide is UPF0250 protein COSY_0496 (Vesicomyosocius okutanii subsp. Calyptogena okutanii (strain HA)).